Here is a 275-residue protein sequence, read N- to C-terminus: Formamidopyrimidine-DNA glycosylase (275 aa).

The Schiff-base intermediate with DNA role is filled by Pro-2. Glu-3 (proton donor) is an active-site residue. Lys-58 functions as the Proton donor; for beta-elimination activity in the catalytic mechanism. 3 residues coordinate DNA: His-91, Arg-109, and Arg-154. An FPG-type zinc finger spans residues 240-274; it reads AVYERAGLPCRVCGTPIRRLVQGQRATYFCPSCQK. Residue Arg-264 is the Proton donor; for delta-elimination activity of the active site.

Belongs to the FPG family. As to quaternary structure, monomer. It depends on Zn(2+) as a cofactor.

It carries out the reaction Hydrolysis of DNA containing ring-opened 7-methylguanine residues, releasing 2,6-diamino-4-hydroxy-5-(N-methyl)formamidopyrimidine.. It catalyses the reaction 2'-deoxyribonucleotide-(2'-deoxyribose 5'-phosphate)-2'-deoxyribonucleotide-DNA = a 3'-end 2'-deoxyribonucleotide-(2,3-dehydro-2,3-deoxyribose 5'-phosphate)-DNA + a 5'-end 5'-phospho-2'-deoxyribonucleoside-DNA + H(+). Involved in base excision repair of DNA damaged by oxidation or by mutagenic agents. Acts as a DNA glycosylase that recognizes and removes damaged bases. Has a preference for oxidized purines, such as 7,8-dihydro-8-oxoguanine (8-oxoG). Has AP (apurinic/apyrimidinic) lyase activity and introduces nicks in the DNA strand. Cleaves the DNA backbone by beta-delta elimination to generate a single-strand break at the site of the removed base with both 3'- and 5'-phosphates. The polypeptide is Formamidopyrimidine-DNA glycosylase (Bordetella pertussis (strain Tohama I / ATCC BAA-589 / NCTC 13251)).